The following is a 219-amino-acid chain: Adenylate kinase (219 aa).

Residue 13 to 18 coordinates ATP; that stretch reads GAGKGT. Residues 33–62 are NMP; that stretch reads STGDIFRAAIKNETKMGLEAKKYIDAGNLV. AMP contacts are provided by residues threonine 34, arginine 39, 60 to 62, 88 to 91, and glutamine 95; these read NLV and GYPR. The segment at 129 to 167 is LID; it reads GRFICRTCGATYHKLYNKPKVEGTCDVCGGHDFYQRDDD. Arginine 130 is an ATP binding site. Zn(2+) contacts are provided by cysteine 133 and cysteine 136. 139 to 140 is an ATP binding site; that stretch reads TY. 2 residues coordinate Zn(2+): cysteine 153 and cysteine 156. Residues arginine 164 and arginine 175 each contribute to the AMP site. Arginine 203 lines the ATP pocket.

It belongs to the adenylate kinase family. In terms of assembly, monomer.

It is found in the cytoplasm. It carries out the reaction AMP + ATP = 2 ADP. It functions in the pathway purine metabolism; AMP biosynthesis via salvage pathway; AMP from ADP: step 1/1. Its function is as follows. Catalyzes the reversible transfer of the terminal phosphate group between ATP and AMP. Plays an important role in cellular energy homeostasis and in adenine nucleotide metabolism. The protein is Adenylate kinase of Lactiplantibacillus plantarum (strain ATCC BAA-793 / NCIMB 8826 / WCFS1) (Lactobacillus plantarum).